Reading from the N-terminus, the 113-residue chain is Cell cycle protein GpsB (113 aa).

A coiled-coil region spans residues 36–68; sequence LDMVIKDYSTFTQEIEALQAENIRLVQELDNAP.

Belongs to the GpsB family. As to quaternary structure, forms polymers through the coiled coil domains. Interacts with PBP1, MreC and EzrA.

The protein localises to the cytoplasm. Its function is as follows. Divisome component that associates with the complex late in its assembly, after the Z-ring is formed, and is dependent on DivIC and PBP2B for its recruitment to the divisome. Together with EzrA, is a key component of the system that regulates PBP1 localization during cell cycle progression. Its main role could be the removal of PBP1 from the cell pole after pole maturation is completed. Also contributes to the recruitment of PBP1 to the division complex. Not essential for septum formation. The polypeptide is Cell cycle protein GpsB (Listeria monocytogenes serotype 4b (strain CLIP80459)).